The following is a 463-amino-acid chain: MSNLGKVIQIIGPIIDIKFDSENLPDLFNALEINAGDRKVIAEVEQHIGDDTIRAIAMEDTEGLKRGMEALDTGKSVSVPVGKEVLGRLFNVLGKPIDGAGEFISEESYPIHRSAPSFEEQSVEPEIFETGIKVIDLLAPYQKGGKIGLFGGAGVGKTVLIQELINNIAKEHGGLSVFTGVGERTREGNDLYYEMKESGVLEKTALVFGQMNEPPGARMRVALTGLTMSEYFRDQGQDVLLFIDNIFRFTQAGSEVSALLGRIPSAVGYQPTLATEMGALQERITSTKNGSITSVQAVYVPADDLTDPAPATTFAHLDATTVLSRSITELGIYPAVDPLESSSRMLDPRIIGEEHYEVAIKVKNILERYRELQDIIAILGIDELSEEDKLVVGRARKIQRFLSQPFTVAEQFTGMQGKYVPIKETVRGFKEILEGKHDNIPESAFLFQGTIEDVLKKAQQMEI.

Position 151-158 (151-158) interacts with ATP; sequence GGAGVGKT.

Belongs to the ATPase alpha/beta chains family. In terms of assembly, F-type ATPases have 2 components, CF(1) - the catalytic core - and CF(0) - the membrane proton channel. CF(1) has five subunits: alpha(3), beta(3), gamma(1), delta(1), epsilon(1). CF(0) has three main subunits: a(1), b(2) and c(9-12). The alpha and beta chains form an alternating ring which encloses part of the gamma chain. CF(1) is attached to CF(0) by a central stalk formed by the gamma and epsilon chains, while a peripheral stalk is formed by the delta and b chains.

Its subcellular location is the cell membrane. It carries out the reaction ATP + H2O + 4 H(+)(in) = ADP + phosphate + 5 H(+)(out). Functionally, produces ATP from ADP in the presence of a proton gradient across the membrane. The catalytic sites are hosted primarily by the beta subunits. The protein is ATP synthase subunit beta of Clostridium botulinum (strain Loch Maree / Type A3).